Consider the following 1420-residue polypeptide: DNA-directed RNA polymerase subunit beta' (1420 aa).

Zn(2+) contacts are provided by Cys71, Cys73, Cys86, and Cys89. Mg(2+) contacts are provided by Asp461, Asp463, and Asp465. Residues Cys815, Cys889, Cys896, and Cys899 each contribute to the Zn(2+) site.

It belongs to the RNA polymerase beta' chain family. In terms of assembly, the RNAP catalytic core consists of 2 alpha, 1 beta, 1 beta' and 1 omega subunit. When a sigma factor is associated with the core the holoenzyme is formed, which can initiate transcription. It depends on Mg(2+) as a cofactor. Requires Zn(2+) as cofactor.

The catalysed reaction is RNA(n) + a ribonucleoside 5'-triphosphate = RNA(n+1) + diphosphate. Its function is as follows. DNA-dependent RNA polymerase catalyzes the transcription of DNA into RNA using the four ribonucleoside triphosphates as substrates. In Haemophilus ducreyi (strain 35000HP / ATCC 700724), this protein is DNA-directed RNA polymerase subunit beta'.